The primary structure comprises 262 residues: Phosphonates import ATP-binding protein PhnC (262 aa).

The 249-residue stretch at 5-253 (ICVEQLSKTF…RFDHLYRSIN (249 aa)) folds into the ABC transporter domain. 37–44 (GPSGSGKS) contacts ATP.

Belongs to the ABC transporter superfamily. Phosphonates importer (TC 3.A.1.9.1) family. In terms of assembly, the complex is composed of two ATP-binding proteins (PhnC), two transmembrane proteins (PhnE) and a solute-binding protein (PhnD).

It is found in the cell inner membrane. The enzyme catalyses phosphonate(out) + ATP + H2O = phosphonate(in) + ADP + phosphate + H(+). In terms of biological role, part of the ABC transporter complex PhnCDE involved in phosphonates import. Responsible for energy coupling to the transport system. The chain is Phosphonates import ATP-binding protein PhnC from Escherichia coli O157:H7.